Here is a 264-residue protein sequence, read N- to C-terminus: Thymidylate synthase (264 aa).

Residue R21 participates in dUMP binding. H51 provides a ligand contact to (6R)-5,10-methylene-5,6,7,8-tetrahydrofolate. 126-127 provides a ligand contact to dUMP; the sequence is RR. C146 functions as the Nucleophile in the catalytic mechanism. DUMP contacts are provided by residues 166 to 169, N177, and 207 to 209; these read RSCD and HLY. Position 169 (D169) interacts with (6R)-5,10-methylene-5,6,7,8-tetrahydrofolate. A263 serves as a coordination point for (6R)-5,10-methylene-5,6,7,8-tetrahydrofolate.

It belongs to the thymidylate synthase family. Bacterial-type ThyA subfamily. Homodimer.

It localises to the cytoplasm. It carries out the reaction dUMP + (6R)-5,10-methylene-5,6,7,8-tetrahydrofolate = 7,8-dihydrofolate + dTMP. Its pathway is pyrimidine metabolism; dTTP biosynthesis. Catalyzes the reductive methylation of 2'-deoxyuridine-5'-monophosphate (dUMP) to 2'-deoxythymidine-5'-monophosphate (dTMP) while utilizing 5,10-methylenetetrahydrofolate (mTHF) as the methyl donor and reductant in the reaction, yielding dihydrofolate (DHF) as a by-product. This enzymatic reaction provides an intracellular de novo source of dTMP, an essential precursor for DNA biosynthesis. The polypeptide is Thymidylate synthase (Sodalis glossinidius (strain morsitans)).